The primary structure comprises 169 residues: Ribosome maturation factor RimP (169 aa).

This sequence belongs to the RimP family.

The protein localises to the cytoplasm. In terms of biological role, required for maturation of 30S ribosomal subunits. The chain is Ribosome maturation factor RimP from Koribacter versatilis (strain Ellin345).